A 230-amino-acid polypeptide reads, in one-letter code: Biosynthetic peptidoglycan transglycosylase (230 aa).

The chain crosses the membrane as a helical span at residues 10-30 (IFLFFIAVIFVYQFWIFSQIV).

Belongs to the glycosyltransferase 51 family.

It is found in the cell inner membrane. It carries out the reaction [GlcNAc-(1-&gt;4)-Mur2Ac(oyl-L-Ala-gamma-D-Glu-L-Lys-D-Ala-D-Ala)](n)-di-trans,octa-cis-undecaprenyl diphosphate + beta-D-GlcNAc-(1-&gt;4)-Mur2Ac(oyl-L-Ala-gamma-D-Glu-L-Lys-D-Ala-D-Ala)-di-trans,octa-cis-undecaprenyl diphosphate = [GlcNAc-(1-&gt;4)-Mur2Ac(oyl-L-Ala-gamma-D-Glu-L-Lys-D-Ala-D-Ala)](n+1)-di-trans,octa-cis-undecaprenyl diphosphate + di-trans,octa-cis-undecaprenyl diphosphate + H(+). The protein operates within cell wall biogenesis; peptidoglycan biosynthesis. Its function is as follows. Peptidoglycan polymerase that catalyzes glycan chain elongation from lipid-linked precursors. In Nitrosospira multiformis (strain ATCC 25196 / NCIMB 11849 / C 71), this protein is Biosynthetic peptidoglycan transglycosylase.